The following is a 377-amino-acid chain: MLKRASFVEVNTASLRHNFSAVKSIVPKDAHIMAVVKANAYGAGAIKASEIFLQEGANYLGVAALDEALELRSHFPKTPILILGYSPNANASMLIDNDLSAMVFSLEQAEVFSQMALKSQKRLKVHLKIDTGMHRLGLEPNFKSIETIKKIRALKGLEVEGIFTHLSNADAKIKTHAKNQMKAFNAFLEQLLDQKIEFQYRHAYNSAGILSLCNGNENRFLNLYRPGIMLYGFYPSNEMKESCPTILKNVISLKAQIVQIRSVKKGEFIGYGEHFYTNEETLVGVLALGYADGLMRALGNRIQVAINNQLAPLIGKVCMDQCFVKLNNIQAKEGDEVILFGDKSAKANDASEIAALLNTIPYETISTLSKRLERVYI.

The Proton acceptor; specific for D-alanine role is filled by K37. The residue at position 37 (K37) is an N6-(pyridoxal phosphate)lysine. Residue R135 coordinates substrate. Y271 (proton acceptor; specific for L-alanine) is an active-site residue. M319 is a substrate binding site.

It belongs to the alanine racemase family. Pyridoxal 5'-phosphate is required as a cofactor.

It carries out the reaction L-alanine = D-alanine. The protein operates within amino-acid biosynthesis; D-alanine biosynthesis; D-alanine from L-alanine: step 1/1. Its function is as follows. Catalyzes the interconversion of L-alanine and D-alanine. May also act on other amino acids. The sequence is that of Alanine racemase (alr) from Helicobacter pylori (strain P12).